We begin with the raw amino-acid sequence, 512 residues long: FAD-dependent monooxygenase prx3 (512 aa).

The signal sequence occupies residues 1-19 (MLSLKAFLALSLSIHLSQG). Positions 63–235 (CQTTPTCVFA…TRFDLATFSV (173 aa)) constitute an FAD-binding PCMH-type domain. H100 bears the Pros-8alpha-FAD histidine mark. 6 N-linked (GlcNAc...) asparagine glycosylation sites follow: N197, N281, N307, N329, N361, and N477.

The protein belongs to the oxygen-dependent FAD-linked oxidoreductase family.

It functions in the pathway sesquiterpene biosynthesis. FAD-dependent monooxygenase; part of the gene cluster that mediates the biosynthesis of PR-toxin, a bicyclic sesquiterpene belonging to the eremophilane class and acting as a mycotoxin. The first step of the pathway is catalyzed by the aristolochene synthase which performs the cyclization of trans,trans-farnesyl diphosphate (FPP) to the bicyclic sesquiterpene aristolochene. Following the formation of aristolochene, the non-oxygenated aristolochene is converted to the trioxygenated intermediate eremofortin B, via 7-epi-neopetasone. This conversion appears to involve three enzymes, a hydroxysterol oxidase-like enzyme, the quinone-oxidase prx3 that forms the quinone-type-structure in the bicyclic nucleus of aristolochene with the C8-oxo group and the C-3 hydroxyl group, and the P450 monooxygenase ORF6 that introduces the epoxide at the double bond between carbons 1 and 2. No monoxy or dioxy-intermediates have been reported to be released to the broth, so these three early oxidative reactions may be coupled together. Eremofortin B is further oxidized by another P450 monooxygenase, that introduces a second epoxide between carbons 7 and 11 prior to acetylation to eremofortin A by the acetyltransferase ORF8. The second epoxidation may be performed by a second P450 monooxygenase. After the acetylation step, eremofortin A is converted to eremofortin C and then to PR-toxin. First the conversion of eremofortin A to eremofortin C proceeds by oxidation of the side chain of the molecule at C-12 and is catalyzed by the short-chain oxidoreductase prx1. The cytochrome P450 monooxygenase ORF6 is probably also involved in this step. The primary alcohol formed at C-12 is finally oxidized by the short-chain alcohol dehydrogenase prx4 that forms PR-toxin. This Penicillium roqueforti (strain FM164) protein is FAD-dependent monooxygenase prx3.